A 361-amino-acid chain; its full sequence is Outer mitochondrial transmembrane helix translocase (361 aa).

Over 1–15 the chain is Mitochondrial intermembrane; that stretch reads MVHAEAFSRPLSRNE. The chain crosses the membrane as a helical span at residues 16 to 32; the sequence is VVGLIFRLTIFGAVTYF. At 33–361 the chain is on the cytoplasmic side; that stretch reads TIKWMVDAID…QNVLTHVCLD (329 aa). 133 to 140 lines the ATP pocket; sequence GPPGCGKT. The residue at position 322 (Ser322) is a Phosphoserine.

Belongs to the AAA ATPase family. MSP1 subfamily. Interacts with GRIA2 and GRIP1 in an ATP-dependent manner. ATAD1-catalyzed ATP hydrolysis disrupts not only its binding to GRIA2 and GRIP1, but also interaction between GRIP1 and GRIA2, leading to AMPAR complex disassembly.

It is found in the mitochondrion outer membrane. Its subcellular location is the peroxisome membrane. It localises to the postsynaptic cell membrane. The enzyme catalyses [protein]-with a C-terminal TM segment(out) + ATP + H2O = [protein]-with a C-terminal TM segment(in) + ADP + phosphate + H(+). Outer mitochondrial translocase required to remove mislocalized tail-anchored transmembrane proteins on mitochondria. Specifically recognizes and binds tail-anchored transmembrane proteins: acts as a dislocase that mediates the ATP-dependent extraction of mistargeted tail-anchored transmembrane proteins from the mitochondrion outer membrane. Also plays a critical role in regulating the surface expression of AMPA receptors (AMPAR), thereby regulating synaptic plasticity and learning and memory. Required for NMDA-stimulated AMPAR internalization and inhibition of GRIA1 and GRIA2 recycling back to the plasma membrane; these activities are ATPase-dependent. The chain is Outer mitochondrial transmembrane helix translocase from Homo sapiens (Human).